The chain runs to 205 residues: Small ribosomal subunit protein uS3 (205 aa).

One can recognise a KH type-2 domain in the interval 12–80; it reads VRQFLAKELA…PAQINIAEVR (69 aa).

This sequence belongs to the universal ribosomal protein uS3 family. In terms of assembly, part of the 30S ribosomal subunit. Forms a tight complex with proteins S10 and S14.

Functionally, binds the lower part of the 30S subunit head. Binds mRNA in the 70S ribosome, positioning it for translation. This Buchnera aphidicola subsp. Acyrthosiphon kondoi (Acyrthosiphon kondoi symbiotic bacterium) protein is Small ribosomal subunit protein uS3.